Here is a 346-residue protein sequence, read N- to C-terminus: MSADTETLARKVREEVIKPEQSTLISPDRQSPSLLRREATVEPRFELFHFVFSVCSQKVRGTLMEKGVTFGSNELTILPPQSENYCPQYVRLRLRSEAAAKHRPVSSFTGQSSVDSEGFDPLVVPTLVDHETGRILADSKAICLYLCDALSGGTDLLPADIREAVLKQVQLADTTPHVALLYGADPDGDRRPESMQAVMPGIHAHKIDAVRRNIPLADGDPLLLEAYQHKIVKEEAAASFVINEPQMRTAISKAEQLVTDLDRDLGASTGPWLFGDRFTLADLFWAVSLYRFLWLGYSGFWKDGAGKPRVEAYANRLFARPSVKDAIIQWPGHPPSENVIHLLSNA.

The GST N-terminal domain maps to 43 to 154; that stretch reads PRFELFHFVF…YLCDALSGGT (112 aa). Positions 189-335 constitute a GST C-terminal domain; that stretch reads DRRPESMQAV…AIIQWPGHPP (147 aa).

This sequence belongs to the GST superfamily.

It catalyses the reaction 2,5-dichlorohydroquinone + 2 glutathione = chlorohydroquinone + glutathione disulfide + chloride + H(+). It carries out the reaction chlorohydroquinone + 2 glutathione = hydroquinone + glutathione disulfide + chloride + H(+). The protein operates within xenobiotic degradation; gamma-hexachlorocyclohexane degradation. In terms of biological role, catalyzes the degradation of 2,5-dichlorohydroquinone (2,5-DCHQ) into hydroquinone (HQ) via chlorohydroquinone (CHQ). This Sphingobium indicum (strain DSM 16412 / CCM 7286 / MTCC 6364 / B90A) protein is 2,5-dichlorohydroquinone reductive dechlorinase.